We begin with the raw amino-acid sequence, 1324 residues long: Myotubularin-related protein DDB_G0290005 (1324 aa).

A disordered region spans residues 140-276; it reads KYHDNTTPNN…TSSTNGNCST (137 aa). A compositionally biased stretch (low complexity) spans 144–180; the sequence is NTTPNNNNNNNNNNNNNNNNTNNNNNNNINKSNNSST. The segment covering 181-194 has biased composition (polar residues); the sequence is DQLNSFSLEKQPSQ. Low complexity predominate over residues 195 to 222; the sequence is NENLNNNNNNNNNNNNGNNNINNNNLMN. A compositionally biased stretch (polar residues) spans 223 to 247; that stretch reads SLTQPSTSSRSRLLKSNSTPINLNE. The span at 248–276 shows a compositional bias: low complexity; sequence SSTSTNSPTLSSTTTTTTTTSSTNGNCST. In terms of domain architecture, Myotubularin phosphatase spans 349–807; the sequence is GWLFYDPIEE…KGVQLWSDYF (459 aa). Substrate contacts are provided by residues 514–515, 575–581, and Arg-621; these read NI and CIDGWDR. The Phosphocysteine intermediate role is filled by Cys-575. Disordered stretches follow at residues 624-664, 841-1043, 1066-1110, 1144-1213, and 1232-1296; these read QSIS…TTTS, QKKK…QQQE, EQQE…QQQT, RKQE…LTMP, and LHPN…DNTS. 2 stretches are compositionally biased toward low complexity: residues 625–664 and 852–864; these read SISS…TTTS and GASG…SGSS. A compositionally biased stretch (basic residues) spans 865–882; sequence SKHHHHHHHHHHHHHHRK. Residues 883–894 are compositionally biased toward basic and acidic residues; sequence STDEKDSKEKSS. Composition is skewed to low complexity over residues 899 to 914 and 927 to 973; these read SRTS…STSS and TITT…TTTP. The span at 988–1002 shows a compositional bias: basic and acidic residues; it reads DKLKSPSGDDIKQEQ. Polar residues predominate over residues 1005–1024; the sequence is MNQFTSQHPNNQMESSSEIN. Positions 1020 to 1195 form a coiled coil; it reads SSEINQQNEQ…LEQQKPKADI (176 aa). Residues 1025-1043 are compositionally biased toward low complexity; sequence QQNEQSQLEQQQEQQQQQE. Residues 1079-1090 show a composition bias toward polar residues; sequence PNETITYSMESD. The span at 1091–1109 shows a compositional bias: low complexity; the sequence is SQSSISQNQNQLQQQQQQQ. The span at 1144-1193 shows a compositional bias: basic and acidic residues; that stretch reads RKQEKEKRKLEKEKKQKERAERKLEKEKKRDQKEREQKEKELLEQQKPKA. Polar residues predominate over residues 1234 to 1243; that stretch reads PNLSDQNSQT. Low complexity-rich tracts occupy residues 1244–1258 and 1265–1294; these read NSSG…NSPN and SNLS…NNDN.

This sequence belongs to the protein-tyrosine phosphatase family. Non-receptor class myotubularin subfamily.

Its subcellular location is the cytoplasm. Phosphatase that acts on lipids with a phosphoinositol headgroup. The protein is Myotubularin-related protein DDB_G0290005 of Dictyostelium discoideum (Social amoeba).